The chain runs to 445 residues: Putative U-box domain-containing protein 47 (445 aa).

The region spanning 64 to 137 (EVPKEFICTL…KEWCLIHNFD (74 aa)) is the U-box domain.

The catalysed reaction is S-ubiquitinyl-[E2 ubiquitin-conjugating enzyme]-L-cysteine + [acceptor protein]-L-lysine = [E2 ubiquitin-conjugating enzyme]-L-cysteine + N(6)-ubiquitinyl-[acceptor protein]-L-lysine.. Its pathway is protein modification; protein ubiquitination. In terms of biological role, functions as an E3 ubiquitin ligase. This chain is Putative U-box domain-containing protein 47 (PUB47), found in Arabidopsis thaliana (Mouse-ear cress).